Consider the following 132-residue polypeptide: UPF0102 protein Acel_1550 (132 aa).

It belongs to the UPF0102 family.

The chain is UPF0102 protein Acel_1550 from Acidothermus cellulolyticus (strain ATCC 43068 / DSM 8971 / 11B).